We begin with the raw amino-acid sequence, 305 residues long: Tetraspanin-12 (305 aa).

At 1–12 the chain is on the cytoplasmic side; the sequence is MAREDSVKCLRC. S-palmitoyl cysteine attachment occurs at residues cysteine 9 and cysteine 12. The helical transmembrane segment at 13 to 33 threads the bilayer; it reads LLYALNLLFWLMSISVLAVSA. Over 34 to 59 the chain is Extracellular; it reads WMRDYLNNVLTLTAETRVEEAVILTY. A helical membrane pass occupies residues 60 to 80; it reads FPVVHPVMIAVCCFLIIVGML. A lipid anchor (S-palmitoyl cysteine) is attached at cysteine 83. The chain crosses the membrane as a helical span at residues 90-110; sequence LLLLAWYFGTLLVIFCVELAC. The Extracellular portion of the chain corresponds to 111–224; the sequence is GVWTYEQEVM…RGTKQLQVLR (114 aa). Residues 225-245 form a helical membrane-spanning segment; it reads FLGISIGVTQILAMILTITLL. At 246-305 the chain is on the cytoplasmic side; sequence WALYYDRREPGTDQMLSLKNDASQHLSCHSVELLKPSLSRIFEHTSMANSFNTHFEMEEL.

This sequence belongs to the tetraspanin (TM4SF) family. As to quaternary structure, component of a complex, at least composed of TSPAN12, FZD4 and norrin (NDP). Interacts (when palmitoylated) with ADAM10. Interacts with MMP14/MT1-MMP. Palmitoylated; required for interaction with ADAM10. The precise position of palmitoylated residues is unclear and occurs either on Cys-9, Cys-12 and/or Cys-83.

It is found in the cell membrane. Functionally, regulator of cell surface receptor signal transduction. Plays a central role in retinal vascularization by regulating norrin (NDP) signal transduction. Acts in concert with norrin (NDP) to promote FZD4 multimerization and subsequent activation of FZD4, leading to promote accumulation of beta-catenin (CTNNB1) and stimulate LEF/TCF-mediated transcriptional programs. Suprisingly, it only activates the norrin (NDP)-dependent activation of FZD4, while it does not activate the Wnt-dependent activation of FZD4, suggesting the existence of a Wnt-independent signaling that also promote accumulation the beta-catenin (CTNNB1). Acts as a regulator of membrane proteinases such as ADAM10 and MMP14/MT1-MMP. Activates ADAM10-dependent cleavage activity of amyloid precursor protein (APP). Activates MMP14/MT1-MMP-dependent cleavage activity. The sequence is that of Tetraspanin-12 (Tspan12) from Rattus norvegicus (Rat).